A 681-amino-acid chain; its full sequence is Potassium-transporting ATPase ATP-binding subunit 1 (681 aa).

Helical transmembrane passes span 30 to 50, 59 to 79, 216 to 236, and 255 to 275; these read LLVY…FFGI, LAIA…EAIA, ILLV…LPFT, and IALL…SIGI. Aspartate 306 functions as the 4-aspartylphosphate intermediate in the catalytic mechanism. ATP contacts are provided by residues aspartate 343, glutamate 347, 376-383, and lysine 394; that span reads FTATTRMS. Residues aspartate 517 and aspartate 521 each coordinate Mg(2+). Helical transmembrane passes span 587-607, 615-635, and 661-681; these read FAII…LNLM, AILS…PLSL, and LIAP…LGIV.

This sequence belongs to the cation transport ATPase (P-type) (TC 3.A.3) family. Type IA subfamily. As to quaternary structure, the system is composed of three essential subunits: KdpA, KdpB and KdpC.

The protein resides in the cell membrane. The catalysed reaction is K(+)(out) + ATP + H2O = K(+)(in) + ADP + phosphate + H(+). Functionally, part of the high-affinity ATP-driven potassium transport (or Kdp) system, which catalyzes the hydrolysis of ATP coupled with the electrogenic transport of potassium into the cytoplasm. This subunit is responsible for energy coupling to the transport system and for the release of the potassium ions to the cytoplasm. This is Potassium-transporting ATPase ATP-binding subunit 1 from Listeria innocua serovar 6a (strain ATCC BAA-680 / CLIP 11262).